The primary structure comprises 190 residues: Threonylcarbamoyl-AMP synthase (190 aa).

Positions 7 to 190 (SEAVAHAVAV…ALTGELFRQG (184 aa)) constitute a YrdC-like domain.

Belongs to the SUA5 family. TsaC subfamily.

It is found in the cytoplasm. The catalysed reaction is L-threonine + hydrogencarbonate + ATP = L-threonylcarbamoyladenylate + diphosphate + H2O. Its function is as follows. Required for the formation of a threonylcarbamoyl group on adenosine at position 37 (t(6)A37) in tRNAs that read codons beginning with adenine. Catalyzes the conversion of L-threonine, HCO(3)(-)/CO(2) and ATP to give threonylcarbamoyl-AMP (TC-AMP) as the acyladenylate intermediate, with the release of diphosphate. The polypeptide is Threonylcarbamoyl-AMP synthase (Klebsiella pneumoniae subsp. pneumoniae (strain ATCC 700721 / MGH 78578)).